The following is a 262-amino-acid chain: tRNA pseudouridine synthase A (262 aa).

D54 serves as the catalytic Nucleophile. Y113 is a substrate binding site.

This sequence belongs to the tRNA pseudouridine synthase TruA family. Homodimer.

The enzyme catalyses uridine(38/39/40) in tRNA = pseudouridine(38/39/40) in tRNA. Its function is as follows. Formation of pseudouridine at positions 38, 39 and 40 in the anticodon stem and loop of transfer RNAs. In Lactobacillus acidophilus (strain ATCC 700396 / NCK56 / N2 / NCFM), this protein is tRNA pseudouridine synthase A.